We begin with the raw amino-acid sequence, 397 residues long: Ribosomal RNA large subunit methyltransferase I (397 aa).

Residues S2–K80 form the PUA domain.

It belongs to the methyltransferase superfamily. RlmI family.

It localises to the cytoplasm. The enzyme catalyses cytidine(1962) in 23S rRNA + S-adenosyl-L-methionine = 5-methylcytidine(1962) in 23S rRNA + S-adenosyl-L-homocysteine + H(+). Functionally, specifically methylates the cytosine at position 1962 (m5C1962) of 23S rRNA. The chain is Ribosomal RNA large subunit methyltransferase I from Vibrio vulnificus (strain YJ016).